The primary structure comprises 137 residues: Small ribosomal subunit protein uS12 (137 aa).

The disordered stretch occupies residues 1–57 (MPTINQLIRKGRKSKGSKSNSPALNFGYNSYKKVQTNNSAPQKRGVATRVGTMTPKK). Positions 32–41 (KKVQTNNSAP) are enriched in polar residues. Residue aspartate 102 is modified to 3-methylthioaspartic acid.

The protein belongs to the universal ribosomal protein uS12 family. Part of the 30S ribosomal subunit. Contacts proteins S8 and S17. May interact with IF1 in the 30S initiation complex.

Its function is as follows. With S4 and S5 plays an important role in translational accuracy. In terms of biological role, interacts with and stabilizes bases of the 16S rRNA that are involved in tRNA selection in the A site and with the mRNA backbone. Located at the interface of the 30S and 50S subunits, it traverses the body of the 30S subunit contacting proteins on the other side and probably holding the rRNA structure together. The combined cluster of proteins S8, S12 and S17 appears to hold together the shoulder and platform of the 30S subunit. The chain is Small ribosomal subunit protein uS12 from Ligilactobacillus salivarius (strain UCC118) (Lactobacillus salivarius).